A 150-amino-acid polypeptide reads, in one-letter code: Putative biopolymer transport protein ExbB-like 2 (150 aa).

3 consecutive transmembrane segments (helical) span residues 5-25, 63-83, and 97-117; these read VDYG…AIAI, APYI…MDLG, and LALA…AIVI.

This sequence belongs to the ExbB/TolQ family.

It localises to the cell inner membrane. This chain is Putative biopolymer transport protein ExbB-like 2, found in Helicobacter pylori (strain J99 / ATCC 700824) (Campylobacter pylori J99).